The sequence spans 312 residues: Methionyl-tRNA formyltransferase (312 aa).

111-114 (SLLP) serves as a coordination point for (6S)-5,6,7,8-tetrahydrofolate.

Belongs to the Fmt family.

It catalyses the reaction L-methionyl-tRNA(fMet) + (6R)-10-formyltetrahydrofolate = N-formyl-L-methionyl-tRNA(fMet) + (6S)-5,6,7,8-tetrahydrofolate + H(+). Its function is as follows. Attaches a formyl group to the free amino group of methionyl-tRNA(fMet). The formyl group appears to play a dual role in the initiator identity of N-formylmethionyl-tRNA by promoting its recognition by IF2 and preventing the misappropriation of this tRNA by the elongation apparatus. This Myxococcus xanthus (strain DK1622) protein is Methionyl-tRNA formyltransferase.